The following is a 439-amino-acid chain: Ribosomal protein uS12 methylthiotransferase RimO (439 aa).

One can recognise an MTTase N-terminal domain in the interval 6–116 (GKVGFVSLGC…VMNQVHQVAP (111 aa)). 6 residues coordinate [4Fe-4S] cluster: Cys15, Cys51, Cys80, Cys148, Cys152, and Cys155. A Radical SAM core domain is found at 134–371 (LTPKHYAYLK…MEVQQRISAS (238 aa)). In terms of domain architecture, TRAM spans 374–439 (QAKIGKRMDV…DEYDLWGRPV (66 aa)).

Belongs to the methylthiotransferase family. RimO subfamily. Requires [4Fe-4S] cluster as cofactor.

It is found in the cytoplasm. The enzyme catalyses L-aspartate(89)-[ribosomal protein uS12]-hydrogen + (sulfur carrier)-SH + AH2 + 2 S-adenosyl-L-methionine = 3-methylsulfanyl-L-aspartate(89)-[ribosomal protein uS12]-hydrogen + (sulfur carrier)-H + 5'-deoxyadenosine + L-methionine + A + S-adenosyl-L-homocysteine + 2 H(+). In terms of biological role, catalyzes the methylthiolation of an aspartic acid residue of ribosomal protein uS12. The chain is Ribosomal protein uS12 methylthiotransferase RimO from Hahella chejuensis (strain KCTC 2396).